The sequence spans 153 residues: Ribosome maturation factor RimP (153 aa).

This sequence belongs to the RimP family.

It localises to the cytoplasm. Required for maturation of 30S ribosomal subunits. This chain is Ribosome maturation factor RimP, found in Burkholderia pseudomallei (strain 1710b).